The chain runs to 324 residues: 33 kDa ribonucleoprotein, chloroplastic (324 aa).

Residues 1-71 constitute a chloroplast transit peptide; the sequence is MSGCCFSFAA…YRSSIFLSTC (71 aa). RRM domains are found at residues 114–192 and 217–296; these read GRLY…FPEV and HKLY…AGQK. A disordered region spans residues 294–324; it reads GQKAPVSSPPVVETSPENDSDNSELLSSLSS. The segment covering 298 to 308 has biased composition (low complexity); sequence PVSSPPVVETS.

Its subcellular location is the plastid. The protein resides in the chloroplast. Functionally, could be involved in splicing and/or processing of chloroplast RNA's. The polypeptide is 33 kDa ribonucleoprotein, chloroplastic (Nicotiana sylvestris (Wood tobacco)).